The chain runs to 102 residues: MDISIISDRNNPLLQRREIKFTVSFDAATPSIKDVKMKLVAVLNANKQVLVVDTLDQIFGKLEAEGYAKIYNDEKAMATIETKSVLEKNKIEEEAEAEVAEE.

This sequence belongs to the eukaryotic ribosomal protein eS24 family.

The protein is Small ribosomal subunit protein eS24 of Methanococcus maripaludis (strain DSM 14266 / JCM 13030 / NBRC 101832 / S2 / LL).